The following is a 535-amino-acid chain: Serum response factor-binding protein 1 (535 aa).

Coiled-coil stretches lie at residues 5–27 (LNLN…LIIR) and 107–177 (LKQK…EKCK). 6 stretches are compositionally biased toward basic and acidic residues: residues 128-151 (AAEG…ETKK), 159-191 (KNTE…EKAL), 205-325 (AENK…ERPV), 361-376 (DKEK…ERFY), 406-432 (SDKD…EVQK), and 460-472 (TKRE…ERNK). Disordered stretches follow at residues 128-435 (AAEG…KEIP) and 453-535 (TKPK…VFDD).

The protein localises to the cytoplasm. It is found in the perinuclear region. In terms of biological role, may be involved in regulating transcriptional activation of cardiac genes during the aging process. May play a role in biosynthesis and/or processing of SLC2A4 in adipose cells. The protein is Serum response factor-binding protein 1 of Xenopus tropicalis (Western clawed frog).